Consider the following 548-residue polypeptide: Membrane protein insertase YidC (548 aa).

Residues 6–26 traverse the membrane as a helical segment; that stretch reads NLLVIALLFVSFMIWQAWEQD. The segment at 28–56 is disordered; sequence NPQPQTQQTTQTTTTAAGSAADQGVPASG. Low complexity predominate over residues 29 to 42; sequence PQPQTQQTTQTTTT. The next 4 helical transmembrane spans lie at 350–370, 424–444, 458–478, and 499–519; these read FVGN…GIMY, FPLI…MGSI, LSAQ…MFFI, and PVIF…YYIV.

It belongs to the OXA1/ALB3/YidC family. Type 1 subfamily. As to quaternary structure, interacts with the Sec translocase complex via SecD. Specifically interacts with transmembrane segments of nascent integral membrane proteins during membrane integration.

The protein localises to the cell inner membrane. Required for the insertion and/or proper folding and/or complex formation of integral membrane proteins into the membrane. Involved in integration of membrane proteins that insert both dependently and independently of the Sec translocase complex, as well as at least some lipoproteins. Aids folding of multispanning membrane proteins. In Salmonella agona (strain SL483), this protein is Membrane protein insertase YidC.